The sequence spans 558 residues: Polypeptide N-acetylgalactosaminyltransferase 16 (558 aa).

The Cytoplasmic portion of the chain corresponds to 1–6 (MRKIRA). The chain crosses the membrane as a helical; Signal-anchor for type II membrane protein span at residues 7-26 (NAIAILTVAWILGTFYYLWQ). At 27 to 558 (DNRAHAASSG…AQQWQLLPHT (532 aa)) the chain is on the lumenal side. Residues 33–54 (ASSGGRGAQRAGRRSEQLREDR) form a disordered region. Over residues 45-54 (RRSEQLREDR) the composition is skewed to basic and acidic residues. 5 disulfides stabilise this stretch: Cys113–Cys340, Cys331–Cys409, Cys441–Cys460, Cys486–Cys506, and Cys530–Cys543. The interval 122 to 227 (LPATSVIITF…TEWLPPMLQR (106 aa)) is catalytic subdomain A. Positions 163 and 188 each coordinate substrate. Asp211 lines the Mn(2+) pocket. Ser212 provides a ligand contact to substrate. His213 serves as a coordination point for Mn(2+). The catalytic subdomain B stretch occupies residues 286–348 (PIRTPVIAGG…PCSRVGHVFR (63 aa)). Residue Trp317 participates in substrate binding. His345 is a binding site for Mn(2+). The substrate site is built by Arg348, His351, and Tyr353. A Ricin B-type lectin domain is found at 428–555 (KEALPGIIKQ…DAQAQQWQLL (128 aa)).

The protein belongs to the glycosyltransferase 2 family. GalNAc-T subfamily. Mn(2+) serves as cofactor.

It is found in the golgi apparatus membrane. The catalysed reaction is L-seryl-[protein] + UDP-N-acetyl-alpha-D-galactosamine = a 3-O-[N-acetyl-alpha-D-galactosaminyl]-L-seryl-[protein] + UDP + H(+). It carries out the reaction L-threonyl-[protein] + UDP-N-acetyl-alpha-D-galactosamine = a 3-O-[N-acetyl-alpha-D-galactosaminyl]-L-threonyl-[protein] + UDP + H(+). It participates in protein modification; protein glycosylation. Its function is as follows. Catalyzes the initial reaction in O-linked oligosaccharide biosynthesis, the transfer of an N-acetyl-D-galactosamine residue to a serine or threonine residue on the protein receptor. The protein is Polypeptide N-acetylgalactosaminyltransferase 16 (GALNT16) of Homo sapiens (Human).